Consider the following 82-residue polypeptide: Antimicrobial peptide Smp43 (82 aa).

The signal sequence occupies residues 1–22; that stretch reads MNRKLLLVTLMVTMLVMQPAEA. The propeptide occupies 66–82; that stretch reads EAGQMPFDEFMDILYES.

This sequence belongs to the non-disulfide-bridged peptide (NDBP) superfamily. Long chain multifunctional peptide (group 2) family. Expressed by the venom gland.

The protein localises to the secreted. The protein resides in the target cell membrane. Antimicrobial peptide with moderate activity against Gram-positive bacteria and Gram-negative bacteria, as well as low activity against fungi. Acts by inducing bacterial membrane disruption. Shows activity against B.subtilis (MIC=4 ug/ml), S.epidermidis (MIC=64 ug/ml), S.aureus (MIC=32 ug/ml), E.coli (MIC=128 ug/ml), K.pneumoniae (MIC=64 ug/ml), P.aeruginosa (MIC=64 ug/ml), and C.albicans (MIC=128 ug/ml). Does not show hemolysis activity. In Scorpio palmatus (Israeli golden scorpion), this protein is Antimicrobial peptide Smp43.